A 391-amino-acid chain; its full sequence is UPF0229 protein CLL_A3091 (391 aa).

2 disordered regions span residues 1–23 (MAIF…DKRR) and 75–107 (VATG…GNEE). Residues 80–92 (GEEKRGDKIESGS) are compositionally biased toward basic and acidic residues.

It belongs to the UPF0229 family.

This Clostridium botulinum (strain Eklund 17B / Type B) protein is UPF0229 protein CLL_A3091.